Reading from the N-terminus, the 578-residue chain is DNA polymerase III subunit gamma/tau (578 aa).

Position 42 to 49 (42 to 49) interacts with ATP; the sequence is GPRGCGKT. Zn(2+)-binding residues include Cys61, Cys70, Cys73, and Cys76. Disordered regions lie at residues 389–423 and 525–559; these read APQA…ASSE and AVNP…RDPE. 2 stretches are compositionally biased toward basic and acidic residues: residues 402–412 and 536–559; these read EPKHQPAREPR and QRDE…RDPE.

Belongs to the DnaX/STICHEL family. DNA polymerase III contains a core (composed of alpha, epsilon and theta chains) that associates with a tau subunit. This core dimerizes to form the POLIII' complex. PolIII' associates with the gamma complex (composed of gamma, delta, delta', psi and chi chains) and with the beta chain to form the complete DNA polymerase III complex.

The enzyme catalyses DNA(n) + a 2'-deoxyribonucleoside 5'-triphosphate = DNA(n+1) + diphosphate. In terms of biological role, DNA polymerase III is a complex, multichain enzyme responsible for most of the replicative synthesis in bacteria. This DNA polymerase also exhibits 3' to 5' exonuclease activity. This Mycobacterium bovis (strain ATCC BAA-935 / AF2122/97) protein is DNA polymerase III subunit gamma/tau (dnaX).